The chain runs to 555 residues: Polypyrimidine tract-binding protein 1 (555 aa).

Position 1 is an N-acetylmethionine (M1). The residue at position 16 (S16) is a Phosphoserine. RRM domains follow at residues 58-142 (RVIH…SSPN), 183-259 (LRII…FSKL), and 361-412 (SVLL…SQAQ). A Glycyl lysine isopeptide (Lys-Gly) (interchain with G-Cter in SUMO2) cross-link involves residue K64. The residue at position 126 (Y126) is a Phosphotyrosine. T137 bears the Phosphothreonine mark. The residue at position 140 (S140) is a Phosphoserine. Residue K217 forms a Glycyl lysine isopeptide (Lys-Gly) (interchain with G-Cter in SUMO2) linkage. The interval 435-457 (HQSVQLPREGQEDQGLTKDYGSS) is disordered. A Phosphoserine modification is found at S457. The 76-residue stretch at 478 to 553 (ATLHLSNIPP…HHLRVSFSKS (76 aa)) folds into the RRM 4 domain.

Monomer. Part of a ternary complex containing KHSRP, PTBP1, PTBP2 and HNRPH1. Interacts with SFPQ. Interacts with RAVER1. Interacts with IVNS1ABP (via BACK domain); the interaction is direct. As to expression, expressed in myoblast; expression gradually decreases during muscle cell differentiation (at protein level).

It localises to the nucleus. Plays a role in pre-mRNA splicing and in the regulation of alternative splicing events. Activates exon skipping of its own pre-mRNA during muscle cell differentiation. Binds to the polypyrimidine tract of introns. May promote RNA looping when bound to two separate polypyrimidine tracts in the same pre-mRNA. May promote the binding of U2 snRNP to pre-mRNA. Cooperates with RAVER1 to modulate switching between mutually exclusive exons during maturation of the TPM1 pre-mRNA. Represses the splicing of MAPT/Tau exon 10. Binds to polypyrimidine-rich controlling element (PCE) of CFTR and promotes exon skipping of CFTR exon 9, thereby antagonizing TIA1 and its role in exon inclusion of CFTR exon 9. Plays a role in the splicing of pyruvate kinase PKM by binding repressively to a polypyrimidine tract flanking PKM exon 9, inhibiting exon 9 inclusion and resulting in exon 10 inclusion and production of the PKM M2 isoform. This chain is Polypyrimidine tract-binding protein 1 (Ptbp1), found in Mus musculus (Mouse).